A 167-amino-acid chain; its full sequence is MDHGFYPSNLDGEGLRIGIVQARFNEPVCAELLEACVAELEKLGVEGEDTLVVTVPGALEVPLALQKMAESGQFDALVALGAVVRGETYHFELVSNESGAGITRVGLDFNMPVANGILTVDTDEQAHARTREKGRDCARAAVEMANLVVALDSLRDQEDEEDEDDDE.

5-amino-6-(D-ribitylamino)uracil contacts are provided by residues phenylalanine 24, 58 to 60 (ALE), and 82 to 84 (AVV). 87–88 (ET) lines the (2S)-2-hydroxy-3-oxobutyl phosphate pocket. Catalysis depends on histidine 90, which acts as the Proton donor. Asparagine 115 contributes to the 5-amino-6-(D-ribitylamino)uracil binding site. Position 129 (arginine 129) interacts with (2S)-2-hydroxy-3-oxobutyl phosphate.

This sequence belongs to the DMRL synthase family.

It catalyses the reaction (2S)-2-hydroxy-3-oxobutyl phosphate + 5-amino-6-(D-ribitylamino)uracil = 6,7-dimethyl-8-(1-D-ribityl)lumazine + phosphate + 2 H2O + H(+). It functions in the pathway cofactor biosynthesis; riboflavin biosynthesis; riboflavin from 2-hydroxy-3-oxobutyl phosphate and 5-amino-6-(D-ribitylamino)uracil: step 1/2. Catalyzes the formation of 6,7-dimethyl-8-ribityllumazine by condensation of 5-amino-6-(D-ribitylamino)uracil with 3,4-dihydroxy-2-butanone 4-phosphate. This is the penultimate step in the biosynthesis of riboflavin. In Cupriavidus pinatubonensis (strain JMP 134 / LMG 1197) (Cupriavidus necator (strain JMP 134)), this protein is 6,7-dimethyl-8-ribityllumazine synthase.